A 253-amino-acid chain; its full sequence is 5'-nucleotidase SurE (253 aa).

Residues Asp-8, Asp-9, Ser-40, and Asn-93 each contribute to the a divalent metal cation site.

It belongs to the SurE nucleotidase family. It depends on a divalent metal cation as a cofactor.

The protein resides in the cytoplasm. The catalysed reaction is a ribonucleoside 5'-phosphate + H2O = a ribonucleoside + phosphate. In terms of biological role, nucleotidase that shows phosphatase activity on nucleoside 5'-monophosphates. This Methylobacterium nodulans (strain LMG 21967 / CNCM I-2342 / ORS 2060) protein is 5'-nucleotidase SurE.